We begin with the raw amino-acid sequence, 528 residues long: Glutamyl-tRNA(Gln) amidotransferase subunit B, mitochondrial (528 aa).

The transit peptide at 1-21 (MSWRLSFRTNLLIYNVRRRNY) directs the protein to the mitochondrion.

It belongs to the GatB/GatE family. GatB subfamily. In terms of assembly, subunit of the heterotrimeric GatCAB amidotransferase (AdT) complex, composed of A, B and C subunits.

It is found in the mitochondrion. It catalyses the reaction L-glutamyl-tRNA(Gln) + L-glutamine + ATP + H2O = L-glutaminyl-tRNA(Gln) + L-glutamate + ADP + phosphate + H(+). Its function is as follows. Allows the formation of correctly charged Gln-tRNA(Gln) through the transamidation of misacylated Glu-tRNA(Gln) in the mitochondria. The reaction takes place in the presence of glutamine and ATP through an activated gamma-phospho-Glu-tRNA(Gln). The polypeptide is Glutamyl-tRNA(Gln) amidotransferase subunit B, mitochondrial (Aedes aegypti (Yellowfever mosquito)).